Here is a 383-residue protein sequence, read N- to C-terminus: ATP phosphoribosyltransferase regulatory subunit (383 aa).

It belongs to the class-II aminoacyl-tRNA synthetase family. HisZ subfamily. Heteromultimer composed of HisG and HisZ subunits.

The protein resides in the cytoplasm. It participates in amino-acid biosynthesis; L-histidine biosynthesis; L-histidine from 5-phospho-alpha-D-ribose 1-diphosphate: step 1/9. In terms of biological role, required for the first step of histidine biosynthesis. May allow the feedback regulation of ATP phosphoribosyltransferase activity by histidine. This is ATP phosphoribosyltransferase regulatory subunit from Paraburkholderia xenovorans (strain LB400).